A 368-amino-acid polypeptide reads, in one-letter code: 3-isopropylmalate dehydrogenase (368 aa).

Residue 79 to 91 (GPEWGTSSTVRPE) participates in NAD(+) binding. Substrate-binding residues include Arg-98, Arg-108, Arg-137, and Asp-226. Mg(2+) contacts are provided by Asp-226, Asp-251, and Asp-255. 291–303 (GSAPDISGKGIVN) contacts NAD(+).

Belongs to the isocitrate and isopropylmalate dehydrogenases family. As to quaternary structure, homodimer. It depends on Mg(2+) as a cofactor. The cofactor is Mn(2+).

Its subcellular location is the cytoplasm. It carries out the reaction (2R,3S)-3-isopropylmalate + NAD(+) = 4-methyl-2-oxopentanoate + CO2 + NADH. It participates in amino-acid biosynthesis; L-leucine biosynthesis; L-leucine from 3-methyl-2-oxobutanoate: step 3/4. In terms of biological role, catalyzes the oxidation of 3-carboxy-2-hydroxy-4-methylpentanoate (3-isopropylmalate) to 3-carboxy-4-methyl-2-oxopentanoate. The product decarboxylates to 4-methyl-2 oxopentanoate. The polypeptide is 3-isopropylmalate dehydrogenase (leu-1) (Neurospora crassa (strain ATCC 24698 / 74-OR23-1A / CBS 708.71 / DSM 1257 / FGSC 987)).